The chain runs to 390 residues: MKKRGRKSKKPEEKRAEYDPSSILPLELKIEILMKSPPKSIAKLGFVSNHWSSIIRGQVFTDLYMRRSLAHPRLLFSVYRPNMQMQFFHSCSQEDPSSDHRSVSYTLNSDLRYSFSPPIGGLIFGQNNTKAMIGNPSTGQFVPLPRIKTQRKHIFSIFGYDPVNDLYKVLCMTVRTLRGPHYFRWEDPMWEEPMTEEHQVFTLGPKQKWRMLECKYLHRHHSGSQGICRDGVMYYLASFNDKRSLMSFDLSSEEFNVTKLPEDYILQQFGNMVDHSGKIAIVSQAYSGPMDLWVLEDVSKEEWSKVAAIVPSITDIVGNDQRVIFRGILSTGEIILSLLPTPKPPFFFLCYDPKEKTARKVVIQGIGEDYAAINVFFDHVESHMVLSKLT.

Residues 18-67 form the F-box domain; that stretch reads YDPSSILPLELKIEILMKSPPKSIAKLGFVSNHWSSIIRGQVFTDLYMRR. Kelch repeat units lie at residues 115-161 and 272-323; these read FSPP…FGYD and MVDH…DQRV.

In terms of assembly, part of a SCF (ASK-cullin-F-box) protein ligase complex. Interacts with SKP1A/ASK1, SKP1B/ASK2, ASK11 and ASK13.

It is found in the nucleus. The protein operates within protein modification; protein ubiquitination. Component of SCF(ASK-cullin-F-box) E3 ubiquitin ligase complexes, which may mediate the ubiquitination and subsequent proteasomal degradation of target proteins. In Arabidopsis thaliana (Mouse-ear cress), this protein is F-box/kelch-repeat protein At3g04660.